Here is a 78-residue protein sequence, read N- to C-terminus: Protein SlyX homolog (78 aa).

It belongs to the SlyX family.

The polypeptide is Protein SlyX homolog (Photobacterium profundum (strain SS9)).